Here is a 273-residue protein sequence, read N- to C-terminus: 2,3,4,5-tetrahydropyridine-2,6-dicarboxylate N-succinyltransferase (273 aa).

Substrate contacts are provided by Arg104 and Asp141.

The protein belongs to the transferase hexapeptide repeat family. Homotrimer.

It localises to the cytoplasm. It catalyses the reaction (S)-2,3,4,5-tetrahydrodipicolinate + succinyl-CoA + H2O = (S)-2-succinylamino-6-oxoheptanedioate + CoA. The protein operates within amino-acid biosynthesis; L-lysine biosynthesis via DAP pathway; LL-2,6-diaminopimelate from (S)-tetrahydrodipicolinate (succinylase route): step 1/3. The sequence is that of 2,3,4,5-tetrahydropyridine-2,6-dicarboxylate N-succinyltransferase from Blochmanniella pennsylvanica (strain BPEN).